Reading from the N-terminus, the 159-residue chain is Cyclic pyranopterin monophosphate synthase (159 aa).

Residues 76–78 (LCH) and 114–115 (ME) contribute to the substrate site. Asp129 is a catalytic residue.

The protein belongs to the MoaC family. Homohexamer; trimer of dimers.

The enzyme catalyses (8S)-3',8-cyclo-7,8-dihydroguanosine 5'-triphosphate = cyclic pyranopterin phosphate + diphosphate. It participates in cofactor biosynthesis; molybdopterin biosynthesis. Functionally, catalyzes the conversion of (8S)-3',8-cyclo-7,8-dihydroguanosine 5'-triphosphate to cyclic pyranopterin monophosphate (cPMP). This chain is Cyclic pyranopterin monophosphate synthase, found in Psychromonas ingrahamii (strain DSM 17664 / CCUG 51855 / 37).